The sequence spans 165 residues: MNSLENLILVGVIKSCHGIKGHIILKSFTIPTTKILERNLVNESQENINIKLISQNAKGELICTFNDISTRNEAENLKGYKLFCLRASLPELEEDEFYIADLNHLTILDQDHKKVGKIKNILNFGAGDIIEIEFLDQTTELLPFNKQFFPVITKNYGILNYKREV.

One can recognise a PRC barrel domain in the interval 94–165 (EDEFYIADLN…YGILNYKREV (72 aa)).

It belongs to the RimM family. As to quaternary structure, binds ribosomal protein uS19.

The protein resides in the cytoplasm. An accessory protein needed during the final step in the assembly of 30S ribosomal subunit, possibly for assembly of the head region. Essential for efficient processing of 16S rRNA. May be needed both before and after RbfA during the maturation of 16S rRNA. It has affinity for free ribosomal 30S subunits but not for 70S ribosomes. The polypeptide is Ribosome maturation factor RimM (Rickettsia canadensis (strain McKiel)).